Here is a 942-residue protein sequence, read N- to C-terminus: DNA mismatch repair protein MutS (942 aa).

Residue 613–620 coordinates ATP; the sequence is GPNMAGKS.

Belongs to the DNA mismatch repair MutS family.

Its function is as follows. This protein is involved in the repair of mismatches in DNA. It is possible that it carries out the mismatch recognition step. This protein has a weak ATPase activity. The polypeptide is DNA mismatch repair protein MutS (Clostridium botulinum (strain Eklund 17B / Type B)).